Consider the following 370-residue polypeptide: Cathepsin B-like cysteine proteinase 3 (370 aa).

The signal sequence occupies residues 1-16; sequence MLKVYFLALFLAGCSA. A propeptide spanning residues 17-91 is cleaved from the precursor; sequence FVLDEIRGIN…FVRGEIVPEP (75 aa). 6 cysteine pairs are disulfide-bonded: cysteine 105-cysteine 134, cysteine 117-cysteine 162, cysteine 153-cysteine 210, cysteine 154-cysteine 158, cysteine 190-cysteine 214, and cysteine 198-cysteine 202. Residue cysteine 120 is part of the active site. N-linked (GlcNAc...) asparagine glycosylation occurs at asparagine 138. Active-site residues include histidine 284 and asparagine 304.

Belongs to the peptidase C1 family.

This is Cathepsin B-like cysteine proteinase 3 (cpr-3) from Caenorhabditis elegans.